A 183-amino-acid polypeptide reads, in one-letter code: UPF0200 protein MMP1282 (183 aa).

8–15 is an ATP binding site; that stretch reads GMPGSGKS.

The protein belongs to the UPF0200 family.

This is UPF0200 protein MMP1282 from Methanococcus maripaludis (strain DSM 14266 / JCM 13030 / NBRC 101832 / S2 / LL).